The following is a 338-amino-acid chain: Phenylalanine--tRNA ligase alpha subunit (338 aa).

A Mg(2+)-binding site is contributed by E253.

Belongs to the class-II aminoacyl-tRNA synthetase family. Phe-tRNA synthetase alpha subunit type 1 subfamily. As to quaternary structure, tetramer of two alpha and two beta subunits. Requires Mg(2+) as cofactor.

It is found in the cytoplasm. The catalysed reaction is tRNA(Phe) + L-phenylalanine + ATP = L-phenylalanyl-tRNA(Phe) + AMP + diphosphate + H(+). In Citrifermentans bemidjiense (strain ATCC BAA-1014 / DSM 16622 / JCM 12645 / Bem) (Geobacter bemidjiensis), this protein is Phenylalanine--tRNA ligase alpha subunit.